The chain runs to 229 residues: Ribonuclease 3 (229 aa).

Residues 5–127 enclose the RNase III domain; that stretch reads LSRLERQLGY…LIGAIYLDAG (123 aa). E40 is a Mg(2+) binding site. Residue D44 is part of the active site. D113 and E116 together coordinate Mg(2+). E116 is an active-site residue. One can recognise a DRBM domain in the interval 154-224; the sequence is DPKTRLQEFL…AAAALIALGV (71 aa).

It belongs to the ribonuclease III family. Homodimer. It depends on Mg(2+) as a cofactor.

It localises to the cytoplasm. The catalysed reaction is Endonucleolytic cleavage to 5'-phosphomonoester.. In terms of biological role, digests double-stranded RNA. Involved in the processing of primary rRNA transcript to yield the immediate precursors to the large and small rRNAs (23S and 16S). Processes some mRNAs, and tRNAs when they are encoded in the rRNA operon. Processes pre-crRNA and tracrRNA of type II CRISPR loci if present in the organism. In Pseudomonas fluorescens (strain ATCC BAA-477 / NRRL B-23932 / Pf-5), this protein is Ribonuclease 3.